The primary structure comprises 370 residues: Phospho-N-acetylmuramoyl-pentapeptide-transferase (370 aa).

The next 10 membrane-spanning stretches (helical) occupy residues 31 to 51 (LTSM…LYGL), 73 to 93 (TMGG…WGNL), 98 to 118 (IIVL…DDYM), 135 to 155 (LLSI…TGVI), 177 to 197 (GPVL…IIGS), 209 to 229 (GLAT…AYVS), 251 to 271 (VFLS…AHPA), 273 to 293 (VFMG…IVIL), 298 to 318 (ILLL…ILQV), and 347 to 367 (KIVI…LSTL).

Belongs to the glycosyltransferase 4 family. MraY subfamily. The cofactor is Mg(2+).

The protein resides in the cell inner membrane. The enzyme catalyses UDP-N-acetyl-alpha-D-muramoyl-L-alanyl-gamma-D-glutamyl-meso-2,6-diaminopimeloyl-D-alanyl-D-alanine + di-trans,octa-cis-undecaprenyl phosphate = di-trans,octa-cis-undecaprenyl diphospho-N-acetyl-alpha-D-muramoyl-L-alanyl-D-glutamyl-meso-2,6-diaminopimeloyl-D-alanyl-D-alanine + UMP. Its pathway is cell wall biogenesis; peptidoglycan biosynthesis. Functionally, catalyzes the initial step of the lipid cycle reactions in the biosynthesis of the cell wall peptidoglycan: transfers peptidoglycan precursor phospho-MurNAc-pentapeptide from UDP-MurNAc-pentapeptide onto the lipid carrier undecaprenyl phosphate, yielding undecaprenyl-pyrophosphoryl-MurNAc-pentapeptide, known as lipid I. This Leptospira borgpetersenii serovar Hardjo-bovis (strain JB197) protein is Phospho-N-acetylmuramoyl-pentapeptide-transferase.